Here is a 258-residue protein sequence, read N- to C-terminus: Type III pantothenate kinase (258 aa).

6 to 13 contributes to the ATP binding site; sequence DVGNTQIF. 107–110 contacts substrate; the sequence is GADR. The Proton acceptor role is filled by aspartate 109. Aspartate 130 serves as a coordination point for K(+). Threonine 133 lines the ATP pocket. A substrate-binding site is contributed by threonine 185.

This sequence belongs to the type III pantothenate kinase family. Homodimer. Requires NH4(+) as cofactor. It depends on K(+) as a cofactor.

The protein localises to the cytoplasm. The enzyme catalyses (R)-pantothenate + ATP = (R)-4'-phosphopantothenate + ADP + H(+). It participates in cofactor biosynthesis; coenzyme A biosynthesis; CoA from (R)-pantothenate: step 1/5. Its function is as follows. Catalyzes the phosphorylation of pantothenate (Pan), the first step in CoA biosynthesis. This Elusimicrobium minutum (strain Pei191) protein is Type III pantothenate kinase.